Reading from the N-terminus, the 434-residue chain is UDP-N-acetylmuramoylalanine--D-glutamate ligase (434 aa).

113-119 is a binding site for ATP; that stretch reads GSNGKST.

Belongs to the MurCDEF family.

It is found in the cytoplasm. It catalyses the reaction UDP-N-acetyl-alpha-D-muramoyl-L-alanine + D-glutamate + ATP = UDP-N-acetyl-alpha-D-muramoyl-L-alanyl-D-glutamate + ADP + phosphate + H(+). The protein operates within cell wall biogenesis; peptidoglycan biosynthesis. Cell wall formation. Catalyzes the addition of glutamate to the nucleotide precursor UDP-N-acetylmuramoyl-L-alanine (UMA). This is UDP-N-acetylmuramoylalanine--D-glutamate ligase from Pasteurella multocida (strain Pm70).